The following is a 282-amino-acid chain: Probable transcription factor At1g66420 (282 aa).

A disordered region spans residues 33–73 (SKKNEEFCGGSGKVQPSEMKRRSEGTSTDMTSKRAKKVSAE).

Belongs to the GeBP family.

The protein is Probable transcription factor At1g66420 of Arabidopsis thaliana (Mouse-ear cress).